The following is a 314-amino-acid chain: DNA-directed RNA polymerase subunit alpha (314 aa).

The alpha N-terminal domain (alpha-NTD) stretch occupies residues 1–228 (MIEIEKPRIE…EHLNIFVGLT (228 aa)). The tract at residues 246–314 (EKVLEMSIEE…DLGLGLRKED (69 aa)) is alpha C-terminal domain (alpha-CTD).

The protein belongs to the RNA polymerase alpha chain family. Homodimer. The RNAP catalytic core consists of 2 alpha, 1 beta, 1 beta' and 1 omega subunit. When a sigma factor is associated with the core the holoenzyme is formed, which can initiate transcription.

The enzyme catalyses RNA(n) + a ribonucleoside 5'-triphosphate = RNA(n+1) + diphosphate. DNA-dependent RNA polymerase catalyzes the transcription of DNA into RNA using the four ribonucleoside triphosphates as substrates. This is DNA-directed RNA polymerase subunit alpha from Staphylococcus aureus (strain Mu3 / ATCC 700698).